The primary structure comprises 3473 residues: AP2/ERF domain-containing protein PFD0985w (3473 aa).

Disordered regions lie at residues 35-61, 366-450, 647-704, 750-801, 1096-1196, 1300-1328, 1388-1418, 1773-1807, and 1864-1898; these read NNIIQEDPNNGHNDNINNNDINNNNNN, KMER…HLVC, NNNN…INAK, NIIK…RKKK, VDNN…MNMN, DNTSISLRNKRSRDVGSNQNCDHNNNSRG, HLRSSNPQSTDNYSSEEYMQRSSMRTRGAER, NNTGTTQNNNKYGTNSNNNNNNNNNNNNNNNNNKV, and IGEDDDKKNTSDNDLTSLKRRKNGNSKRAKSNNLS. 3 stretches are compositionally biased toward low complexity: residues 44 to 61, 396 to 442, and 647 to 666; these read NGHNDNINNNDINNNNNN, NNND…NSNN, and NNNNNINCGDDGNNNNNNNN. The span at 683 to 694 shows a compositional bias: basic and acidic residues; sequence TGDKHETSKKED. The span at 751–768 shows a compositional bias: low complexity; it reads IIKSDNVNNNNNNNNNNN. A compositionally biased stretch (basic residues) spans 785-801; it reads NKKHKKKNIHDNNRKKK. Residues 1098-1156 show a composition bias toward low complexity; that stretch reads NNNNNNNNNNNNNVNNISNNGTNLEENANNANNANNPNNANNPNNANNSNNADYVNDYN. Acidic residues predominate over residues 1160–1171; it reads KEEDDDDEEEDN. A compositionally biased stretch (low complexity) spans 1182 to 1196; sequence TNYNININGENMNMN. Polar residues-rich tracts occupy residues 1314–1326 and 1390–1412; these read VGSNQNCDHNNNS and RSSNPQSTDNYSSEEYMQRSSMR. Over residues 1773–1805 the composition is skewed to low complexity; the sequence is NNTGTTQNNNKYGTNSNNNNNNNNNNNNNNNNN. Positions 1881–1893 are enriched in basic residues; it reads LKRRKNGNSKRAK. The AP2/ERF 1 DNA-binding region spans 1957–2011; that stretch reads PLPTGVYFDSARKLWRCQWKENGKFKTKGFSLIHYSTLEEARKQCILYRCDVGNI. Disordered stretches follow at residues 2068 to 2088, 2319 to 2343, 2387 to 2470, 2520 to 2584, 2609 to 2677, 2840 to 2860, 2881 to 2902, and 2937 to 2960; these read EKTGVSQGVSTANNNDNNVNN, QVDVVGDGSGTQALKRSKRSKSNSK, TNDN…NIRS, LGNG…NYNN, LYGK…PASN, MNNNNNNNNNNNNNNNNNNVK, NDKLEKEKNGGGGVVSSSSSSP, and KYVECGNGDKETNDYNTRRKKKDE. Residues 2333–2342 are compositionally biased toward basic residues; sequence KRSKRSKSNS. Composition is skewed to low complexity over residues 2388–2400 and 2409–2460; these read NDNNNDGINNNND and DNNN…NNND. A compositionally biased stretch (acidic residues) spans 2525 to 2542; that stretch reads DGEEEGGGDYDEKEDDLL. Low complexity-rich tracts occupy residues 2557–2584 and 2615–2624; these read NNNNNNNNNNNNNNNNNNNNNNNNNYNN and NNNNNNNNNN. The span at 2663 to 2675 shows a compositional bias: polar residues; it reads LLNSQVNESSAPA. The segment covering 2841–2858 has biased composition (low complexity); it reads NNNNNNNNNNNNNNNNNN. Residues 2943-2953 are compositionally biased toward basic and acidic residues; that stretch reads NGDKETNDYNT. The segment at residues 3268–3321 is a DNA-binding region (AP2/ERF 2); the sequence is SLPKGIYYDHAKKLYRVQYIINNSIKTKGFSVKKLGLAQAKIEAESFRNFCLEN. Residues 3369–3391 are compositionally biased toward low complexity; that stretch reads KMSINNDGNNNDGNNNDGNNNDD. Positions 3369–3473 are disordered; sequence KMSINNDGNN…NNDNEMSQNE (105 aa). Acidic residues predominate over residues 3392-3403; the sequence is NNNDDNNNDDNN. Residues 3404-3457 are compositionally biased toward low complexity; the sequence is NDGNNNDDNNNEGINNDDNNNEGINNDDNNNEGINNNDDNNNNDDNNNEGINND.

It is found in the nucleus. The protein is AP2/ERF domain-containing protein PFD0985w of Plasmodium falciparum (isolate 3D7).